Reading from the N-terminus, the 133-residue chain is Cytochrome c' (133 aa).

Heme c contacts are provided by arginine 12, threonine 72, cysteine 122, cysteine 125, and histidine 126.

Post-translationally, binds 1 heme c group covalently per subunit.

In terms of biological role, cytochrome c' is the most widely occurring bacterial c-type cytochrome. Cytochromes c' are high-spin proteins and the heme has no sixth ligand. Their exact function is not known. This chain is Cytochrome c', found in Rhodocyclus tenuis (Rhodospirillum tenue).